The primary structure comprises 86 residues: Large ribosomal subunit protein bL27 (86 aa).

Residues 1–24 (MAHKKGTGSTRNGRDSNSKRLGVK) are disordered.

The protein belongs to the bacterial ribosomal protein bL27 family.

This is Large ribosomal subunit protein bL27 from Prochlorococcus marinus (strain AS9601).